The chain runs to 341 residues: L-threonine 3-dehydrogenase (341 aa).

Cysteine 38 serves as a coordination point for Zn(2+). Active-site charge relay system residues include threonine 40 and histidine 43. Zn(2+) contacts are provided by histidine 63, glutamate 64, cysteine 93, cysteine 96, cysteine 99, and cysteine 107. NAD(+) is bound by residues isoleucine 175, aspartate 195, arginine 200, 262–264, and 286–287; these read LGI and IY.

This sequence belongs to the zinc-containing alcohol dehydrogenase family. As to quaternary structure, homotetramer. The cofactor is Zn(2+).

It localises to the cytoplasm. The enzyme catalyses L-threonine + NAD(+) = (2S)-2-amino-3-oxobutanoate + NADH + H(+). Its pathway is amino-acid degradation; L-threonine degradation via oxydo-reductase pathway; glycine from L-threonine: step 1/2. In terms of biological role, catalyzes the NAD(+)-dependent oxidation of L-threonine to 2-amino-3-ketobutyrate. This is L-threonine 3-dehydrogenase from Shigella boydii serotype 4 (strain Sb227).